Reading from the N-terminus, the 324-residue chain is tRNA dimethylallyltransferase (324 aa).

17-24 is an ATP binding site; it reads GPTASGKT. 19-24 lines the substrate pocket; that stretch reads TASGKT. Interaction with substrate tRNA stretches follow at residues 42 to 45, 166 to 170, and 251 to 256; these read DSAL, QRIQR, and RCVGYR.

The protein belongs to the IPP transferase family. As to quaternary structure, monomer. Requires Mg(2+) as cofactor.

The enzyme catalyses adenosine(37) in tRNA + dimethylallyl diphosphate = N(6)-dimethylallyladenosine(37) in tRNA + diphosphate. In terms of biological role, catalyzes the transfer of a dimethylallyl group onto the adenine at position 37 in tRNAs that read codons beginning with uridine, leading to the formation of N6-(dimethylallyl)adenosine (i(6)A). In Burkholderia thailandensis (strain ATCC 700388 / DSM 13276 / CCUG 48851 / CIP 106301 / E264), this protein is tRNA dimethylallyltransferase.